Consider the following 539-residue polypeptide: Carotene epsilon-monooxygenase, chloroplastic (539 aa).

The N-terminal 36 residues, 1-36, are a transit peptide targeting the chloroplast; it reads MESSLFSPSSSSYSSLFTAKPTRLLSPKPKFTFSIR. Cysteine 487 contributes to the heme binding site.

Belongs to the cytochrome P450 family. Heme is required as a cofactor.

It localises to the plastid. The protein resides in the chloroplast. The catalysed reaction is alpha-carotene + reduced [NADPH--hemoprotein reductase] + O2 = alpha-cryptoxanthin + oxidized [NADPH--hemoprotein reductase] + H2O + H(+). The enzyme catalyses zeinoxanthin + reduced [NADPH--hemoprotein reductase] + O2 = lutein + oxidized [NADPH--hemoprotein reductase] + H2O + H(+). Functionally, heme-containing cytochrome P450 involved in the biosynthesis of xanthophylls. Specific for epsilon- and beta-ring hydroxylation of alpha-carotene. Has only a low activity toward the beta-rings of beta-carotene. The preferred substrate in planta is not alpha-carotene but the epsilon-ring of zeinoxanthin. Possesses a major beta-carotene hydroxylase activity in planta when depleted in its preferred substrate alpha-carotene. The chain is Carotene epsilon-monooxygenase, chloroplastic (CYP97C1) from Arabidopsis thaliana (Mouse-ear cress).